The chain runs to 631 residues: 1-deoxy-D-xylulose-5-phosphate synthase (631 aa).

Residues His78 and 119 to 121 (AHS) each bind thiamine diphosphate. Asp150 contacts Mg(2+). Thiamine diphosphate-binding positions include 151–152 (GA), Asn179, Tyr286, and Glu368. A Mg(2+)-binding site is contributed by Asn179.

This sequence belongs to the transketolase family. DXPS subfamily. In terms of assembly, homodimer. Mg(2+) is required as a cofactor. Requires thiamine diphosphate as cofactor.

It catalyses the reaction D-glyceraldehyde 3-phosphate + pyruvate + H(+) = 1-deoxy-D-xylulose 5-phosphate + CO2. The protein operates within metabolic intermediate biosynthesis; 1-deoxy-D-xylulose 5-phosphate biosynthesis; 1-deoxy-D-xylulose 5-phosphate from D-glyceraldehyde 3-phosphate and pyruvate: step 1/1. Its function is as follows. Catalyzes the acyloin condensation reaction between C atoms 2 and 3 of pyruvate and glyceraldehyde 3-phosphate to yield 1-deoxy-D-xylulose-5-phosphate (DXP). This Verminephrobacter eiseniae (strain EF01-2) protein is 1-deoxy-D-xylulose-5-phosphate synthase.